The primary structure comprises 334 residues: tRNA N6-adenosine threonylcarbamoyltransferase (334 aa).

The Fe cation site is built by histidine 112 and histidine 116. Residues 135-139 (VVSGG), aspartate 168, glycine 181, aspartate 185, and asparagine 274 contribute to the substrate site. Position 303 (aspartate 303) interacts with Fe cation.

The protein belongs to the KAE1 / TsaD family. Fe(2+) serves as cofactor.

It is found in the cytoplasm. The enzyme catalyses L-threonylcarbamoyladenylate + adenosine(37) in tRNA = N(6)-L-threonylcarbamoyladenosine(37) in tRNA + AMP + H(+). Its function is as follows. Required for the formation of a threonylcarbamoyl group on adenosine at position 37 (t(6)A37) in tRNAs that read codons beginning with adenine. Is involved in the transfer of the threonylcarbamoyl moiety of threonylcarbamoyl-AMP (TC-AMP) to the N6 group of A37, together with TsaE and TsaB. TsaD likely plays a direct catalytic role in this reaction. The protein is tRNA N6-adenosine threonylcarbamoyltransferase of Anaeromyxobacter dehalogenans (strain 2CP-1 / ATCC BAA-258).